The chain runs to 96 residues: Large ribosomal subunit protein bL21 (96 aa).

The protein belongs to the bacterial ribosomal protein bL21 family. As to quaternary structure, part of the 50S ribosomal subunit. Contacts protein L20.

Its function is as follows. This protein binds to 23S rRNA in the presence of protein L20. In Prosthecochloris aestuarii (strain DSM 271 / SK 413), this protein is Large ribosomal subunit protein bL21.